We begin with the raw amino-acid sequence, 367 residues long: MEKSSIYGLTWTNLTEWLEAHGQKKFRATQVWDWLYRKRVKTFEEMSNVPKETIELLTANFVMNTLEEQVVQESTDGTTKYLFKLSDGNLIETVMMKQEYGLSVCVTTQVGCNIGCTFCASGLLKKSRDLTAGEIVEQIMNVQHYLDGRNLEERVSHVVVMGIGEPFDNYDNVMDFLRVINHDKGLAIGARHITVSTSGLAPRIIDFANEDFQVNLAISLHAPNNELRTSIMRINKTYSIEKLMEAIHYYVNKTNRRITFEYIMLKGVNDHKKEALELAALLGEHRHLAYVNLIPYNPVDEHIDYERSTKEDVLAFYDTLKKNGINCVIRREHGTDIDAACGQLRSKQIKRVGVRERMKQKQAAAEE.

The active-site Proton acceptor is the Glu92. Residues Gln98–Asn326 enclose the Radical SAM core domain. A disulfide bond links Cys105 and Cys341. [4Fe-4S] cluster is bound by residues Cys112, Cys116, and Cys119. S-adenosyl-L-methionine is bound by residues Gly164–Glu165, Ser196, Ser219–His221, and Asn297. Cys341 functions as the S-methylcysteine intermediate in the catalytic mechanism.

Belongs to the radical SAM superfamily. RlmN family. It depends on [4Fe-4S] cluster as a cofactor.

Its subcellular location is the cytoplasm. It carries out the reaction adenosine(2503) in 23S rRNA + 2 reduced [2Fe-2S]-[ferredoxin] + 2 S-adenosyl-L-methionine = 2-methyladenosine(2503) in 23S rRNA + 5'-deoxyadenosine + L-methionine + 2 oxidized [2Fe-2S]-[ferredoxin] + S-adenosyl-L-homocysteine. The enzyme catalyses adenosine(37) in tRNA + 2 reduced [2Fe-2S]-[ferredoxin] + 2 S-adenosyl-L-methionine = 2-methyladenosine(37) in tRNA + 5'-deoxyadenosine + L-methionine + 2 oxidized [2Fe-2S]-[ferredoxin] + S-adenosyl-L-homocysteine. Functionally, specifically methylates position 2 of adenine 2503 in 23S rRNA and position 2 of adenine 37 in tRNAs. The protein is Probable dual-specificity RNA methyltransferase RlmN of Listeria monocytogenes serovar 1/2a (strain ATCC BAA-679 / EGD-e).